The sequence spans 471 residues: Vitellogenic carboxypeptidase (471 aa).

The N-terminal stretch at 1–19 (MVKFHLLVLIAFTCYTCSD) is a signal peptide. N135 is a glycosylation site (N-linked (GlcNAc...) asparagine). Residues S207, D391, and H448 contribute to the active site.

It belongs to the peptidase S10 family. Synthesized in the fat body of vitellogenic females, secreted into the hemolymph and accumulates in yolk bodies of developing oocytes.

Its subcellular location is the secreted. In terms of biological role, may play a role in activating hydrolytic enzymes that are involved in the degradation of yolk proteins in developing embryos or may function as an exopeptidase in the degradation of vitellogenin. This Aedes aegypti (Yellowfever mosquito) protein is Vitellogenic carboxypeptidase (VCP).